Reading from the N-terminus, the 481-residue chain is Ankyrin repeat, SAM and basic leucine zipper domain-containing protein 1 (481 aa).

Positions 1–10 (MASGALRGLA) are enriched in low complexity. A disordered region spans residues 1 to 23 (MASGALRGLAVAGGGESSDSEDD). Residues Ser17, Ser18, and Ser20 each carry the phosphoserine modification. 6 ANK repeats span residues 45–74 (EKSE…SVDS), 78–107 (YGWT…NASF), 110–144 (DKQT…DPNI), 148–177 (RLMT…EVNA), 181–210 (NGYT…NKML), and 214–243 (DGKI…PLEG). The region spanning 272 to 334 (SYTAFGDLEI…KILSALKELE (63 aa)) is the SAM domain.

Interacts with DDX4, PIWIL1, RANBP9 and TDRD1.

The protein localises to the cytoplasm. In terms of biological role, plays a central role during spermatogenesis by repressing transposable elements and preventing their mobilization, which is essential for the germline integrity. Acts via the piRNA metabolic process, which mediates the repression of transposable elements during meiosis by forming complexes composed of piRNAs and Piwi proteins and governs the methylation and subsequent repression of transposons. Its association with pi-bodies suggests a participation in the primary piRNAs metabolic process. Required prior to the pachytene stage to facilitate the production of multiple types of piRNAs, including those associated with repeats involved in the regulation of retrotransposons. May act by mediating protein-protein interactions during germ cell maturation. In Eulemur macaco macaco (Black lemur), this protein is Ankyrin repeat, SAM and basic leucine zipper domain-containing protein 1 (ASZ1).